Here is a 191-residue protein sequence, read N- to C-terminus: Adenine phosphoribosyltransferase (191 aa).

This sequence belongs to the purine/pyrimidine phosphoribosyltransferase family. As to quaternary structure, homodimer.

Its subcellular location is the cytoplasm. The catalysed reaction is AMP + diphosphate = 5-phospho-alpha-D-ribose 1-diphosphate + adenine. It participates in purine metabolism; AMP biosynthesis via salvage pathway; AMP from adenine: step 1/1. Functionally, catalyzes a salvage reaction resulting in the formation of AMP, that is energically less costly than de novo synthesis. This is Adenine phosphoribosyltransferase from Nocardia farcinica (strain IFM 10152).